Reading from the N-terminus, the 462-residue chain is Glutamate--tRNA ligase 1 (462 aa).

Residues 8 to 18 carry the 'HIGH' region motif; it reads PSPTGYLHIGG. Residues 237–241 carry the 'KMSKS' region motif; the sequence is KLSKR. Position 240 (Lys-240) interacts with ATP.

The protein belongs to the class-I aminoacyl-tRNA synthetase family. Glutamate--tRNA ligase type 1 subfamily. In terms of assembly, monomer.

Its subcellular location is the cytoplasm. It carries out the reaction tRNA(Glu) + L-glutamate + ATP = L-glutamyl-tRNA(Glu) + AMP + diphosphate. In terms of biological role, catalyzes the attachment of glutamate to tRNA(Glu) in a two-step reaction: glutamate is first activated by ATP to form Glu-AMP and then transferred to the acceptor end of tRNA(Glu). This Campylobacter hominis (strain ATCC BAA-381 / DSM 21671 / CCUG 45161 / LMG 19568 / NCTC 13146 / CH001A) protein is Glutamate--tRNA ligase 1.